A 245-amino-acid polypeptide reads, in one-letter code: TPR repeat-containing protein PA4299 (245 aa).

Positions 1 to 16 (MKALIGIGLCAALLGG) are cleaved as a signal peptide. Cys17 carries the N-palmitoyl cysteine lipid modification. Cys17 carries the S-diacylglycerol cysteine lipid modification. TPR repeat units follow at residues 100–133 (PEAH…RPTE), 135–167 (RFRN…QQGG), and 169–200 (LPAT…DARD). Residues 210–245 (SWGAVPTPGAAPASDDPLAELPAEANMHTAMANEAP) form a disordered region.

It is found in the cell membrane. This chain is TPR repeat-containing protein PA4299, found in Pseudomonas aeruginosa (strain ATCC 15692 / DSM 22644 / CIP 104116 / JCM 14847 / LMG 12228 / 1C / PRS 101 / PAO1).